A 469-amino-acid polypeptide reads, in one-letter code: MKDLRMVFKSRMNNIHFVGIGGSGMSGIAEVLHNLNYSVSGSDISQNKITDRLEKMGCQIYHKHHQDNIKNAQVIVVSSAIKDNNLEVIKAHQLNIPVVPRAEMLAELMRFRFGIAIAGTHGKTTTTSIITHILNVAELDPTYIIGGILNSSGINAKLGESDYLIAEADESDASFLHLQPMLSVITNIDYDHMVTYDNDYQNLKDAFIKFSANLPFYGACIMCADDEGVNEILNSIHRPLITYGFNNGTDIQAVNVKQVGMQMYFDVIYDKYTKQIPIKLNLIGKHNILNTLAAIGICCELNIKTNIIQKALANFSGVARRLDHHGKLNINNAQVSLFDDYAHHPKEISAVFESLKNTYQDKRLVVIFQPHRYSRTRDLFDDFVYTLSSADILILLNIYPAQEKPIAHINSSTLANAIRRSSGLNPMVIKNPKEILTVLPSIVNNNDILLILGAGDIHILPDLLKSNYI.

Residue 119–125 coordinates ATP; it reads GTHGKTT.

It belongs to the MurCDEF family.

Its subcellular location is the cytoplasm. It catalyses the reaction UDP-N-acetyl-alpha-D-muramate + L-alanine + ATP = UDP-N-acetyl-alpha-D-muramoyl-L-alanine + ADP + phosphate + H(+). The protein operates within cell wall biogenesis; peptidoglycan biosynthesis. Functionally, cell wall formation. The polypeptide is UDP-N-acetylmuramate--L-alanine ligase (Ruthia magnifica subsp. Calyptogena magnifica).